A 337-amino-acid chain; its full sequence is Ferredoxin--NADP reductase (337 aa).

The FAD site is built by Asp35, Gln43, Tyr48, Val88, Phe123, Asp289, and Thr330.

The protein belongs to the ferredoxin--NADP reductase type 2 family. In terms of assembly, homodimer. FAD is required as a cofactor.

The catalysed reaction is 2 reduced [2Fe-2S]-[ferredoxin] + NADP(+) + H(+) = 2 oxidized [2Fe-2S]-[ferredoxin] + NADPH. In Paramagnetospirillum magneticum (strain ATCC 700264 / AMB-1) (Magnetospirillum magneticum), this protein is Ferredoxin--NADP reductase.